Consider the following 985-residue polypeptide: Alpha-glucosidase (985 aa).

Positions 1–25 (MAGLKSFLASSWLLPVACGASQSIV) are cleaved as a signal peptide. 6 N-linked (GlcNAc...) asparagine glycosylation sites follow: Asn126, Asn145, Asn220, Asn255, Asn349, and Asn424. Catalysis depends on Asp492, which acts as the Nucleophile. Glu495 is an active-site residue. Residues Asn508, Asn536, Asn539, Asn602, and Asn624 are each glycosylated (N-linked (GlcNAc...) asparagine). Asp660 serves as the catalytic Proton donor. 5 N-linked (GlcNAc...) asparagine glycosylation sites follow: Asn661, Asn835, Asn881, Asn929, and Asn957.

The protein belongs to the glycosyl hydrolase 31 family.

The catalysed reaction is Hydrolysis of terminal, non-reducing (1-&gt;4)-linked alpha-D-glucose residues with release of alpha-D-glucose.. Hydrolyzes malto-oligosaccharides, but has a low activity toward soluble starch. This chain is Alpha-glucosidase (agdA), found in Aspergillus oryzae (strain ATCC 42149 / RIB 40) (Yellow koji mold).